Reading from the N-terminus, the 341-residue chain is Methionine import ATP-binding protein MetN 2 (341 aa).

In terms of domain architecture, ABC transporter spans 2–241 (INLQNVSKIY…PKEEMTKRFV (240 aa)). Residue 38-45 (GYSGAGKS) participates in ATP binding.

It belongs to the ABC transporter superfamily. Methionine importer (TC 3.A.1.24) family. As to quaternary structure, the complex is composed of two ATP-binding proteins (MetN), two transmembrane proteins (MetI) and a solute-binding protein (MetQ).

The protein localises to the cell membrane. The enzyme catalyses L-methionine(out) + ATP + H2O = L-methionine(in) + ADP + phosphate + H(+). It catalyses the reaction D-methionine(out) + ATP + H2O = D-methionine(in) + ADP + phosphate + H(+). Its function is as follows. Part of the ABC transporter complex MetNIQ involved in methionine import. Responsible for energy coupling to the transport system. In Bacillus licheniformis (strain ATCC 14580 / DSM 13 / JCM 2505 / CCUG 7422 / NBRC 12200 / NCIMB 9375 / NCTC 10341 / NRRL NRS-1264 / Gibson 46), this protein is Methionine import ATP-binding protein MetN 2.